A 405-amino-acid polypeptide reads, in one-letter code: Solute carrier family 35 member E2A (405 aa).

The segment at 1 to 22 (MSAAAKSQVPEEAAPGCEEEPK) is disordered. The next 10 helical transmembrane spans lie at 76–96 (LIYLTLWFFFSFCTLFLNKYI), 106–126 (MLGAVQMLSTTLIGCVKIFVP), 142–162 (FIMTMLFVGLMRFATVVLGLV), 167–187 (VAVSFAETVKSSAPIFTVIMS), 195–215 (TGLLVNLSLIPVMGGLALCTA), 219–241 (SFNILGFSAALSTNIMDCLQNVF), 264–284 (AAAVALLIPAWTFFMDIPVIG), 296–316 (IVLLLLTDGALFHLQSVTAYA), 326–346 (FSVASTVKHALSIWLSIIVFG), and 347–367 (NKITSLSAIGTILVTLGVLLY). The tract at residues 380–405 (SLVTATSRNPEDDTEPLVPQDSRQHH) is disordered.

The protein belongs to the TPT transporter family. SLC35E subfamily.

The protein localises to the membrane. Putative transporter. The polypeptide is Solute carrier family 35 member E2A (Slc35e2a) (Mus musculus (Mouse)).